Here is a 714-residue protein sequence, read N- to C-terminus: DNA ligase (714 aa).

Residues 59-63 (DYEYD), 108-109 (SL), and Glu139 each bind NAD(+). Lys141 (N6-AMP-lysine intermediate) is an active-site residue. Residues Arg162, Glu200, Lys325, and Lys349 each contribute to the NAD(+) site. 4 residues coordinate Zn(2+): Cys443, Cys446, Cys461, and Cys466. A BRCT domain is found at 624–713 (VVENIFEGKT…IPDDLKDKVH (90 aa)).

The protein belongs to the NAD-dependent DNA ligase family. LigA subfamily. It depends on Mg(2+) as a cofactor. The cofactor is Mn(2+).

It carries out the reaction NAD(+) + (deoxyribonucleotide)n-3'-hydroxyl + 5'-phospho-(deoxyribonucleotide)m = (deoxyribonucleotide)n+m + AMP + beta-nicotinamide D-nucleotide.. In terms of biological role, DNA ligase that catalyzes the formation of phosphodiester linkages between 5'-phosphoryl and 3'-hydroxyl groups in double-stranded DNA using NAD as a coenzyme and as the energy source for the reaction. It is essential for DNA replication and repair of damaged DNA. This Persephonella marina (strain DSM 14350 / EX-H1) protein is DNA ligase.